We begin with the raw amino-acid sequence, 311 residues long: Porphobilinogen deaminase (311 aa).

S-(dipyrrolylmethanemethyl)cysteine is present on cysteine 241.

This sequence belongs to the HMBS family. As to quaternary structure, monomer. Dipyrromethane is required as a cofactor.

The catalysed reaction is 4 porphobilinogen + H2O = hydroxymethylbilane + 4 NH4(+). It participates in porphyrin-containing compound metabolism; protoporphyrin-IX biosynthesis; coproporphyrinogen-III from 5-aminolevulinate: step 2/4. Tetrapolymerization of the monopyrrole PBG into the hydroxymethylbilane pre-uroporphyrinogen in several discrete steps. The chain is Porphobilinogen deaminase (hemC) from Halalkalibacterium halodurans (strain ATCC BAA-125 / DSM 18197 / FERM 7344 / JCM 9153 / C-125) (Bacillus halodurans).